The following is a 98-amino-acid chain: Keratin, high sulfur matrix protein, IIIB4 (98 aa).

Residue A1 is modified to N-acetylalanine.

This sequence belongs to the KRTAP type 3 family. As to quaternary structure, interacts with wool keratins. As to expression, wool.

In terms of biological role, in the wool cortex, wool keratin intermediate filaments are embedded in an interfilamentous matrix, consisting of hair keratin-associated proteins (KRTAP), which are essential for the formation of a rigid and resistant wool shaft through their extensive disulfide bond cross-linking with abundant cysteine residues of wool keratins. The matrix proteins include the high-sulfur and high-glycine-tyrosine keratins. The protein is Keratin, high sulfur matrix protein, IIIB4 of Ovis aries (Sheep).